The sequence spans 931 residues: Netrin receptor UNC5C (931 aa).

The first 40 residues, 1-40, serve as a signal peptide directing secretion; sequence MRKGLRATAARCGLGLGYLLQMLVLPALALLSASGTGSAA. The Extracellular segment spans residues 41-380; the sequence is QDDEFFHELP…APDSDDVALY (340 aa). Positions 62–159 constitute an Ig-like domain; it reads PHFLIEPEEA…AGTTKSRKAY (98 aa). Cystine bridges form between cysteine 83–cysteine 144, cysteine 95–cysteine 142, cysteine 188–cysteine 239, cysteine 272–cysteine 309, cysteine 276–cysteine 313, cysteine 287–cysteine 299, cysteine 328–cysteine 362, cysteine 332–cysteine 367, and cysteine 340–cysteine 352. Residues 161 to 256 form the Ig-like C2-type domain; that stretch reads RIAYLRKTFE…KRKSTTATVI (96 aa). The N-linked (GlcNAc...) asparagine glycan is linked to asparagine 236. TSP type-1 domains lie at 260–314 and 316–368; these read NGGW…TLCP and DGRW…GLCM. A glycan (N-linked (GlcNAc...) asparagine) is linked at asparagine 361. A helical transmembrane segment spans residues 381–401; the sequence is VGIVIAVTVCLAITVVVALFV. Residues 402–931 are Cytoplasmic-facing; the sequence is YRKNHRDFES…VVSLAAEGQY (530 aa). The required for netrin-mediated axon repulsion of neuronal growth cones stretch occupies residues 402 to 931; it reads YRKNHRDFES…VVSLAAEGQY (530 aa). Residue serine 502 is modified to Phosphoserine. Residues 530 to 673 enclose the ZU5 domain; it reads CTAFGTFNSL…LSTYALVGQS (144 aa). Tyrosine 568 is subject to Phosphotyrosine. Residues 694-712 are interaction with DCC; that stretch reads SLEYSIRVYCLDDTQDALK. In terms of domain architecture, Death spans 850–929; sequence QKLCSSLDAP…ETVVSLAAEG (80 aa).

This sequence belongs to the unc-5 family. As to quaternary structure, interacts with DCC (via cytoplasmic domain). Interacts (tyrosine phosphorylated form) with PTPN11. Interacts (via extracellular domain) with FLRT3 (via extracellular domain). Interacts (via Ig-like C2-type domain) with DSCAM (via extracellular domain). Interacts (via death domain) with DAPK1. Interacts (via cytoplasmic domain) with TUBB3; this interaction is decreased by NTN1/Netrin-1. Post-translationally, phosphorylated on different cytoplasmic tyrosine residues. Phosphorylation of Tyr-568 leads to an interaction with PTPN11 phosphatase, suggesting that its activity is regulated by phosphorylation/dephosphorylation. Tyrosine phosphorylation is netrin-dependent. Proteolytically cleaved by caspases during apoptosis. The cleavage does not take place when the receptor is associated with netrin ligand. Its cleavage by caspases is required to induce apoptosis. In terms of tissue distribution, expressed in cortical and cerebellar neurons, including cells of the external and internal granular layer and of the Purkinje cell layer (at protein level). Mainly expressed in regions of differentiating neurons. Highly expressed in brain and lung. Expressed in the cerebellum and the neurons of the hippocampus, with enrichment in neurons of the CA3 hippocampal pyramidal layer. Weakly expressed in testis, ovary, spleen, thymus and bladder. Expressed at very low level in kidney, intestine and salivary gland.

It localises to the cell membrane. The protein resides in the cell surface. Its subcellular location is the synapse. It is found in the synaptosome. The protein localises to the cell projection. It localises to the dendrite. The protein resides in the axon. Its subcellular location is the growth cone. It is found in the lamellipodium. The protein localises to the filopodium. Functionally, receptor for netrin required for axon guidance. Mediates axon repulsion of neuronal growth cones in the developing nervous system upon ligand binding. NTN1/Netrin-1 binding might cause dissociation of UNC5C from polymerized TUBB3 in microtubules and thereby lead to increased microtubule dynamics and axon repulsion. Axon repulsion in growth cones may also be caused by its association with DCC that may trigger signaling for repulsion. Might also collaborate with DSCAM in NTN1-mediated axon repulsion independently of DCC. Also involved in corticospinal tract axon guidance independently of DCC. Involved in dorsal root ganglion axon projection towards the spinal cord. It also acts as a dependence receptor required for apoptosis induction when not associated with netrin ligand. This is Netrin receptor UNC5C (Unc5c) from Mus musculus (Mouse).